Here is a 287-residue protein sequence, read N- to C-terminus: 2-dehydro-3-deoxyphosphooctonate aldolase (287 aa).

Belongs to the KdsA family.

The protein resides in the cytoplasm. The enzyme catalyses D-arabinose 5-phosphate + phosphoenolpyruvate + H2O = 3-deoxy-alpha-D-manno-2-octulosonate-8-phosphate + phosphate. The protein operates within carbohydrate biosynthesis; 3-deoxy-D-manno-octulosonate biosynthesis; 3-deoxy-D-manno-octulosonate from D-ribulose 5-phosphate: step 2/3. It participates in bacterial outer membrane biogenesis; lipopolysaccharide biosynthesis. The chain is 2-dehydro-3-deoxyphosphooctonate aldolase from Bradyrhizobium sp. (strain ORS 278).